Here is a 431-residue protein sequence, read N- to C-terminus: Probable ganciclovir kinase (431 aa).

In terms of domain architecture, Protein kinase spans 79-368 (PQEDAVLGSG…KLSIGIDSFG (290 aa)). ATP is bound by residues 85 to 93 (LGSGSFGSV) and Lys103. The Proton acceptor role is filled by Asp195.

Belongs to the protein kinase superfamily. Tyr protein kinase family. HCMV ganciclovir subfamily.

In terms of biological role, phosphorylates the antiviral nucleoside analog ganciclovir. This chain is Probable ganciclovir kinase (36), found in Saimiriine herpesvirus 2 (strain 11) (SaHV-2).